We begin with the raw amino-acid sequence, 283 residues long: Phosphatidylserine decarboxylase proenzyme (283 aa).

Residues Asp88, His145, and Ser248 each act as charge relay system; for autoendoproteolytic cleavage activity in the active site. The Schiff-base intermediate with substrate; via pyruvic acid; for decarboxylase activity role is filled by Ser248. Pyruvic acid (Ser); by autocatalysis is present on Ser248.

Belongs to the phosphatidylserine decarboxylase family. PSD-B subfamily. Prokaryotic type I sub-subfamily. Heterodimer of a large membrane-associated beta subunit and a small pyruvoyl-containing alpha subunit. Pyruvate is required as a cofactor. Post-translationally, is synthesized initially as an inactive proenzyme. Formation of the active enzyme involves a self-maturation process in which the active site pyruvoyl group is generated from an internal serine residue via an autocatalytic post-translational modification. Two non-identical subunits are generated from the proenzyme in this reaction, and the pyruvate is formed at the N-terminus of the alpha chain, which is derived from the carboxyl end of the proenzyme. The autoendoproteolytic cleavage occurs by a canonical serine protease mechanism, in which the side chain hydroxyl group of the serine supplies its oxygen atom to form the C-terminus of the beta chain, while the remainder of the serine residue undergoes an oxidative deamination to produce ammonia and the pyruvoyl prosthetic group on the alpha chain. During this reaction, the Ser that is part of the protease active site of the proenzyme becomes the pyruvoyl prosthetic group, which constitutes an essential element of the active site of the mature decarboxylase.

Its subcellular location is the cell membrane. The catalysed reaction is a 1,2-diacyl-sn-glycero-3-phospho-L-serine + H(+) = a 1,2-diacyl-sn-glycero-3-phosphoethanolamine + CO2. The protein operates within phospholipid metabolism; phosphatidylethanolamine biosynthesis; phosphatidylethanolamine from CDP-diacylglycerol: step 2/2. Functionally, catalyzes the formation of phosphatidylethanolamine (PtdEtn) from phosphatidylserine (PtdSer). The protein is Phosphatidylserine decarboxylase proenzyme of Methylibium petroleiphilum (strain ATCC BAA-1232 / LMG 22953 / PM1).